Consider the following 109-residue polypeptide: C-X-C motif chemokine 13 (109 aa).

The N-terminal stretch at 1 to 22 (MKFISTSLLLMLLVSSLSPVQG) is a signal peptide. 2 cysteine pairs are disulfide-bonded: Cys-33/Cys-60 and Cys-35/Cys-76.

The protein belongs to the intercrine alpha (chemokine CxC) family. As to expression, highest levels in liver, followed by spleen, lymph node, appendix and stomach. Low levels in salivary gland, mammary gland and fetal spleen.

The protein localises to the secreted. Chemotactic for B-lymphocytes but not for T-lymphocytes, monocytes and neutrophils. Does not induce calcium release in B-lymphocytes. Binds to BLR1/CXCR5. In Homo sapiens (Human), this protein is C-X-C motif chemokine 13 (CXCL13).